The following is a 148-amino-acid chain: Cell division protein SepF (148 aa).

Residues 1–59 (MNNKFKDFFGFGDNDSYEERDAYEEHYDEQEEMQNSNRPTNSRDSNVVSIKAGQAGSGP) are disordered. The segment covering 33-48 (MQNSNRPTNSRDSNVV) has biased composition (polar residues).

This sequence belongs to the SepF family. In terms of assembly, homodimer. Interacts with FtsZ.

The protein localises to the cytoplasm. Functionally, cell division protein that is part of the divisome complex and is recruited early to the Z-ring. Probably stimulates Z-ring formation, perhaps through the cross-linking of FtsZ protofilaments. Its function overlaps with FtsA. In Lactobacillus delbrueckii subsp. bulgaricus (strain ATCC BAA-365 / Lb-18), this protein is Cell division protein SepF.